The following is a 354-amino-acid chain: 3'-5' exonuclease (354 aa).

The segment at 1–120 is disordered; sequence MEKYLIKMPI…PSPEKEKPEK (120 aa). 3 stretches are compositionally biased toward basic and acidic residues: residues 13-23, 36-50, and 71-91; these read KASEVPKDKAV, TKND…KENA, and KNLD…ENPP. Phosphoserine occurs at positions 104, 110, and 112. A 3'-5' exonuclease domain is found at 146–314; that stretch reads VLQWVEKQKD…GQVIYRELER (169 aa). Mg(2+) contacts are provided by aspartate 163, glutamate 165, and aspartate 301.

The protein belongs to the WRNexo family.

It localises to the nucleus. Its function is as follows. Has exonuclease activity on both single-stranded and duplex templates bearing overhangs, but not blunt ended duplex DNA, and cleaves in a 3'-5' direction. Essential for the formation of DNA replication focal centers. Has an important role in maintaining genome stability. This chain is 3'-5' exonuclease, found in Drosophila erecta (Fruit fly).